Reading from the N-terminus, the 24-residue chain is Positive regulator of RepFIC repA1 expression (24 aa).

The sequence is that of Positive regulator of RepFIC repA1 expression (repL) from Escherichia coli (strain K12).